Here is a 919-residue protein sequence, read N- to C-terminus: Phosphoenolpyruvate carboxylase (919 aa).

Active-site residues include His138 and Lys579.

It belongs to the PEPCase type 1 family. Mg(2+) serves as cofactor.

It catalyses the reaction oxaloacetate + phosphate = phosphoenolpyruvate + hydrogencarbonate. Its activity is regulated as follows. Activity not stimulated by acetyl-CoA in the absence of any allosteric inhibitor, while the corresponding protein from E.coli is strongly stimulated. Forms oxaloacetate, a four-carbon dicarboxylic acid source for the tricarboxylic acid cycle. The protein is Phosphoenolpyruvate carboxylase (ppc) of Corynebacterium glutamicum (strain ATCC 13032 / DSM 20300 / JCM 1318 / BCRC 11384 / CCUG 27702 / LMG 3730 / NBRC 12168 / NCIMB 10025 / NRRL B-2784 / 534).